The primary structure comprises 313 residues: Olfactory receptor 10G3 (313 aa).

At 1–25 (MERINSTLLTAFILTGIPYPLRLRT) the chain is on the extracellular side. Asn5 is a glycosylation site (N-linked (GlcNAc...) asparagine). The chain crosses the membrane as a helical span at residues 26–46 (LFFVFFFLIYILTQLGNLLIL). Residues 47–54 (ITVWADPR) lie on the Cytoplasmic side of the membrane. Residues 55-76 (LHARPMYIFLGVLSVIDMSISS) form a helical membrane-spanning segment. At 77 to 100 (IIVPRLMMNFTLGVKPIPFGGCVA) the chain is on the extracellular side. A glycan (N-linked (GlcNAc...) asparagine) is linked at Asn85. An intrachain disulfide couples Cys98 to Cys190. A helical transmembrane segment spans residues 101–121 (QLYFYHFLGSTQCFLYTLMAY). The Cytoplasmic segment spans residues 122 to 140 (DRYLAICQPLRYPVLMTAK). Residues 141 to 161 (LSALLVAGAWMAGSIHGALQA) form a helical membrane-spanning segment. The Extracellular segment spans residues 162–198 (ILTFRLPYCGPNQVDYFFCDIPAVLRLACADTTVNEL). Residues 199–218 (VTFVDIGVVVASCFSLILLS) form a helical membrane-spanning segment. Residues 219 to 238 (YIQIIQAILRIHTADGRRRA) lie on the Cytoplasmic side of the membrane. Residues 239–259 (FSTCGAHVTVVTVYYVPCAFI) traverse the membrane as a helical segment. The Extracellular segment spans residues 260–270 (YLRPETNSPLD). Residues 271–291 (GAAALVPTAITPFLNPLIYTL) traverse the membrane as a helical segment. The Cytoplasmic portion of the chain corresponds to 292 to 313 (RNQEVKLALKRMLRSPRTPSEV).

The protein belongs to the G-protein coupled receptor 1 family.

It localises to the cell membrane. Functionally, odorant receptor. This is Olfactory receptor 10G3 (OR10G3) from Homo sapiens (Human).